Consider the following 218-residue polypeptide: N-(5'-phosphoribosyl)anthranilate isomerase (218 aa).

Belongs to the TrpF family.

It catalyses the reaction N-(5-phospho-beta-D-ribosyl)anthranilate = 1-(2-carboxyphenylamino)-1-deoxy-D-ribulose 5-phosphate. It participates in amino-acid biosynthesis; L-tryptophan biosynthesis; L-tryptophan from chorismate: step 3/5. The protein is N-(5'-phosphoribosyl)anthranilate isomerase of Rhodopseudomonas palustris (strain BisA53).